Here is a 115-residue protein sequence, read N- to C-terminus: Succinate dehydrogenase assembly factor 3, mitochondrial (115 aa).

It belongs to the complex I LYR family. SDHAF3 subfamily. Interacts with sdh2 within an sdh1-sdh2 subcomplex.

The protein localises to the mitochondrion matrix. In terms of biological role, plays an essential role in the assembly of succinate dehydrogenase (SDH), an enzyme complex (also referred to as respiratory complex II) that is a component of both the tricarboxylic acid (TCA) cycle and the mitochondrial electron transport chain, and which couples the oxidation of succinate to fumarate with the reduction of ubiquinone (coenzyme Q) to ubiquinol. Promotes maturation of the iron-sulfur protein subunit sdh2 of the SDH catalytic dimer, protecting it from the deleterious effects of oxidants. May act together with SDHAF1. This Schizosaccharomyces pombe (strain 972 / ATCC 24843) (Fission yeast) protein is Succinate dehydrogenase assembly factor 3, mitochondrial.